The sequence spans 566 residues: Cytoplasmic polyadenylation element-binding protein 2 (566 aa).

2 disordered regions span residues 17–46 (FWGN…SVEG) and 64–98 (LERL…IQEQ). Residues 87 to 98 (DSEEEEEDIQEQ) are compositionally biased toward acidic residues. The 83-residue stretch at 430–512 (MVAFIGGVPR…KRVEIKPYFF (83 aa)) folds into the RRM domain.

In terms of biological role, cytoplasmic polyadenylation element binding protein that binds to and regulates the translation of specific mRNAs. This Caenorhabditis briggsae protein is Cytoplasmic polyadenylation element-binding protein 2 (cpb-2).